Consider the following 167-residue polypeptide: Small ribosomal subunit protein uS5 (167 aa).

One can recognise an S5 DRBM domain in the interval 11 to 74; sequence LQEKLIAVNR…EKARRAMINV (64 aa).

Belongs to the universal ribosomal protein uS5 family. As to quaternary structure, part of the 30S ribosomal subunit. Contacts proteins S4 and S8.

Its function is as follows. With S4 and S12 plays an important role in translational accuracy. Located at the back of the 30S subunit body where it stabilizes the conformation of the head with respect to the body. The protein is Small ribosomal subunit protein uS5 of Yersinia enterocolitica serotype O:8 / biotype 1B (strain NCTC 13174 / 8081).